The primary structure comprises 272 residues: Rhamnulose-1-phosphate aldolase (272 aa).

Residue Glu117 is part of the active site. His141, His143, and His212 together coordinate Zn(2+).

Belongs to the aldolase class II family. RhaD subfamily. The cofactor is Zn(2+).

The protein localises to the cytoplasm. The catalysed reaction is L-rhamnulose 1-phosphate = (S)-lactaldehyde + dihydroxyacetone phosphate. Its pathway is carbohydrate degradation; L-rhamnose degradation; glycerone phosphate from L-rhamnose: step 3/3. Catalyzes the reversible cleavage of L-rhamnulose-1-phosphate to dihydroxyacetone phosphate (DHAP) and L-lactaldehyde. This is Rhamnulose-1-phosphate aldolase from Mannheimia succiniciproducens (strain KCTC 0769BP / MBEL55E).